The chain runs to 193 residues: Holliday junction branch migration complex subunit RuvA (193 aa).

The interval 1–64 (MIGRIAGILL…EDANLLYGFL (64 aa)) is domain I. The segment at 65–139 (TPQERTTFRE…GKLGADLGEL (75 aa)) is domain II. A flexible linker region spans residues 139–143 (LAGAA). Residues 144 to 193 (SPSDHATDILNALLALGYSEKEGLAAIKNVPAGTGVSEGIKLALKALSKV) form a domain III region.

It belongs to the RuvA family. In terms of assembly, homotetramer. Forms an RuvA(8)-RuvB(12)-Holliday junction (HJ) complex. HJ DNA is sandwiched between 2 RuvA tetramers; dsDNA enters through RuvA and exits via RuvB. An RuvB hexamer assembles on each DNA strand where it exits the tetramer. Each RuvB hexamer is contacted by two RuvA subunits (via domain III) on 2 adjacent RuvB subunits; this complex drives branch migration. In the full resolvosome a probable DNA-RuvA(4)-RuvB(12)-RuvC(2) complex forms which resolves the HJ.

It localises to the cytoplasm. The RuvA-RuvB-RuvC complex processes Holliday junction (HJ) DNA during genetic recombination and DNA repair, while the RuvA-RuvB complex plays an important role in the rescue of blocked DNA replication forks via replication fork reversal (RFR). RuvA specifically binds to HJ cruciform DNA, conferring on it an open structure. The RuvB hexamer acts as an ATP-dependent pump, pulling dsDNA into and through the RuvAB complex. HJ branch migration allows RuvC to scan DNA until it finds its consensus sequence, where it cleaves and resolves the cruciform DNA. The sequence is that of Holliday junction branch migration complex subunit RuvA from Burkholderia lata (strain ATCC 17760 / DSM 23089 / LMG 22485 / NCIMB 9086 / R18194 / 383).